Here is an 89-residue protein sequence, read N- to C-terminus: Neurotoxin beta-KTx 52.1 (89 aa).

A signal peptide spans Met-1–Ala-20. Positions Gly-21–Asp-39 are excised as a propeptide. The 37-residue stretch at Glu-53 to Lys-89 folds into the BetaSPN-type CS-alpha/beta domain. 3 disulfides stabilise this stretch: Cys-56–Cys-76, Cys-63–Cys-81, and Cys-67–Cys-83.

Belongs to the long chain scorpion toxin family. Class 2 subfamily. Expressed by the venom gland.

It is found in the secreted. Inhibits voltage-gated potassium channel. In Lychas mucronatus (Chinese swimming scorpion), this protein is Neurotoxin beta-KTx 52.1.